A 354-amino-acid chain; its full sequence is DNA integrity scanning protein DisA (354 aa).

The DAC domain maps to glutamate 6–serine 144. Residues glycine 73, leucine 91, and threonine 104–threonine 108 contribute to the ATP site.

Belongs to the DisA family. As to quaternary structure, homooctamer. Mg(2+) serves as cofactor.

It catalyses the reaction 2 ATP = 3',3'-c-di-AMP + 2 diphosphate. Its function is as follows. Participates in a DNA-damage check-point that is active prior to asymmetric division when DNA is damaged. DisA forms globular foci that rapidly scan along the chromosomes during sporulation, searching for lesions. When a lesion is present, DisA pauses at the lesion site. This triggers a cellular response that culminates in a temporary block in sporulation initiation. Also has diadenylate cyclase activity, catalyzing the condensation of 2 ATP molecules into cyclic di-AMP (c-di-AMP). c-di-AMP acts as a signaling molecule that couples DNA integrity with progression of sporulation. The rise in c-di-AMP level generated by DisA while scanning the chromosome, operates as a positive signal that advances sporulation; upon encountering a lesion, the DisA focus arrests at the damaged site and halts c-di-AMP synthesis. The protein is DNA integrity scanning protein DisA of Clostridium kluyveri (strain ATCC 8527 / DSM 555 / NBRC 12016 / NCIMB 10680 / K1).